The following is a 98-amino-acid chain: Plastocyanin (98 aa).

The Plastocyanin-like domain maps to 1–98 (AQIVKLGGDD…AGMKMTITVQ (98 aa)). H38, C83, H86, and M91 together coordinate Cu cation.

This sequence belongs to the plastocyanin family. It depends on Cu(2+) as a cofactor.

It is found in the plastid. Its subcellular location is the chloroplast thylakoid membrane. Functionally, participates in electron transfer between P700 and the cytochrome b6-f complex in photosystem I. The protein is Plastocyanin (PETE) of Ulva arasakii (Sea lettuce).